The primary structure comprises 164 residues: Probable Brix domain-containing ribosomal biogenesis protein (164 aa).

The 164-residue stretch at 1–164 (MIITTSRKPS…IKTVKILDIE (164 aa)) folds into the Brix domain.

In terms of biological role, probably involved in the biogenesis of the ribosome. The polypeptide is Probable Brix domain-containing ribosomal biogenesis protein (Methanococcus maripaludis (strain DSM 14266 / JCM 13030 / NBRC 101832 / S2 / LL)).